Reading from the N-terminus, the 199-residue chain is Golgi to ER traffic protein 1 (199 aa).

At 1–11 (MLLPDLHPYTI) the chain is on the lumenal side. A helical transmembrane segment spans residues 12–31 (LLSIFIVLLLKQLVASIGKS). The Cytoplasmic portion of the chain corresponds to 32-115 (TIKEFVWLVY…SIDKVSNALL (84 aa)). Residues 66–116 (EKRAISAQDEYAKWTKLNRQADKLSAELQKLNQEIQQQKASIDKVSNALLL) adopt a coiled-coil conformation. Residues 116–136 (LVLTTLPIWVARVLYRNTHLF) traverse the membrane as a helical segment. The Lumenal segment spans residues 137–160 (YIRQGIFPKYVEWVLALPFLPNGA). A helical membrane pass occupies residues 161–177 (VGLTIWMFAVNSVVSNF). Over 178–199 (AFLVSFPFAKKVSKPVRDTKIE) the chain is Cytoplasmic.

The protein belongs to the WRB/GET1 family. In terms of assembly, component of the Golgi to ER traffic (GET) complex, which is composed of GET1, GET2 and GET3. Within the complex, GET1 and GET2 form a heterotetramer which is stabilized by phosphatidylinositol binding and which binds to the GET3 homodimer.

It is found in the endoplasmic reticulum membrane. It localises to the golgi apparatus membrane. Required for the post-translational delivery of tail-anchored (TA) proteins to the endoplasmic reticulum. Together with GET2, acts as a membrane receptor for soluble GET3, which recognizes and selectively binds the transmembrane domain of TA proteins in the cytosol. The GET complex cooperates with the HDEL receptor ERD2 to mediate the ATP-dependent retrieval of resident ER proteins that contain a C-terminal H-D-E-L retention signal from the Golgi to the ER. The chain is Golgi to ER traffic protein 1 from Candida dubliniensis (strain CD36 / ATCC MYA-646 / CBS 7987 / NCPF 3949 / NRRL Y-17841) (Yeast).